Consider the following 525-residue polypeptide: Probable alpha-galactosidase A (525 aa).

An N-terminal signal peptide occupies residues Met-1–Ala-17. An intrachain disulfide couples Cys-40 to Cys-72. 3 N-linked (GlcNAc...) asparagine glycosylation sites follow: Asn-43, Asn-81, and Asn-117. A disulfide bridge links Cys-120 with Cys-150. Asp-148 functions as the Nucleophile in the catalytic mechanism. Asn-197 carries N-linked (GlcNAc...) asparagine glycosylation. Asp-206 serves as the catalytic Proton donor. The 124-residue stretch at Pro-402 to Ala-525 folds into the Ricin B-type lectin domain. Intrachain disulfides connect Cys-422/Cys-434 and Cys-459/Cys-472.

It belongs to the glycosyl hydrolase 27 family.

It localises to the secreted. The enzyme catalyses Hydrolysis of terminal, non-reducing alpha-D-galactose residues in alpha-D-galactosides, including galactose oligosaccharides, galactomannans and galactolipids.. Functionally, hydrolyzes a variety of simple alpha-D-galactoside as well as more complex molecules such as oligosaccharides and polysaccharides. This Aspergillus clavatus (strain ATCC 1007 / CBS 513.65 / DSM 816 / NCTC 3887 / NRRL 1 / QM 1276 / 107) protein is Probable alpha-galactosidase A (aglA).